We begin with the raw amino-acid sequence, 210 residues long: Uracil phosphoribosyltransferase (210 aa).

5-phospho-alpha-D-ribose 1-diphosphate-binding positions include R78, R103, and 130-138 (DPMLATGGT). Uracil contacts are provided by residues I193 and 198-200 (GDA). A 5-phospho-alpha-D-ribose 1-diphosphate-binding site is contributed by D199.

The protein belongs to the UPRTase family. It depends on Mg(2+) as a cofactor.

It carries out the reaction UMP + diphosphate = 5-phospho-alpha-D-ribose 1-diphosphate + uracil. It participates in pyrimidine metabolism; UMP biosynthesis via salvage pathway; UMP from uracil: step 1/1. Allosterically activated by GTP. In terms of biological role, catalyzes the conversion of uracil and 5-phospho-alpha-D-ribose 1-diphosphate (PRPP) to UMP and diphosphate. This chain is Uracil phosphoribosyltransferase, found in Xanthomonas axonopodis pv. citri (strain 306).